Reading from the N-terminus, the 149-residue chain is Probable flagellum biosynthesis repressor protein FlbT (149 aa).

Belongs to the FlbT family.

Its function is as follows. Has a post-transcriptional repressor function in flagellum biogenesis. Associates with the 5'-UTR of fljK mRNA and promotes its degradation. In Rhizobium johnstonii (strain DSM 114642 / LMG 32736 / 3841) (Rhizobium leguminosarum bv. viciae), this protein is Probable flagellum biosynthesis repressor protein FlbT.